Consider the following 312-residue polypeptide: Acetyl-coenzyme A carboxylase carboxyl transferase subunit alpha (312 aa).

The region spanning 36–286 (RLDKEVKSIY…KEYFLDALRT (251 aa)) is the CoA carboxyltransferase C-terminal domain.

It belongs to the AccA family. As to quaternary structure, acetyl-CoA carboxylase is a heterohexamer composed of biotin carboxyl carrier protein (AccB), biotin carboxylase (AccC) and two subunits each of ACCase subunit alpha (AccA) and ACCase subunit beta (AccD).

It is found in the cytoplasm. The catalysed reaction is N(6)-carboxybiotinyl-L-lysyl-[protein] + acetyl-CoA = N(6)-biotinyl-L-lysyl-[protein] + malonyl-CoA. The protein operates within lipid metabolism; malonyl-CoA biosynthesis; malonyl-CoA from acetyl-CoA: step 1/1. Component of the acetyl coenzyme A carboxylase (ACC) complex. First, biotin carboxylase catalyzes the carboxylation of biotin on its carrier protein (BCCP) and then the CO(2) group is transferred by the carboxyltransferase to acetyl-CoA to form malonyl-CoA. In Helicobacter pylori (strain G27), this protein is Acetyl-coenzyme A carboxylase carboxyl transferase subunit alpha.